Here is a 632-residue protein sequence, read N- to C-terminus: Extracellular metalloproteinase 2 (632 aa).

A signal peptide spans 1–19 (MHGLLLAGLAAALPLGVAG). A propeptide spanning residues 20-244 (LPARQQSGLS…VHNVVDYVAS (225 aa)) is cleaved from the precursor. A glycan (N-linked (GlcNAc...) asparagine) is linked at Asn270. A Zn(2+)-binding site is contributed by His429. Glu430 is a catalytic residue. His433 provides a ligand contact to Zn(2+).

This sequence belongs to the peptidase M36 family. It depends on Zn(2+) as a cofactor.

Its subcellular location is the secreted. Functionally, secreted metalloproteinase that allows assimilation of proteinaceous substrates and probably acts as a virulence factor. The chain is Extracellular metalloproteinase 2 (MEP2) from Arthroderma gypseum (strain ATCC MYA-4604 / CBS 118893) (Microsporum gypseum).